Reading from the N-terminus, the 319-residue chain is Acetyl-coenzyme A carboxylase carboxyl transferase subunit alpha (319 aa).

One can recognise a CoA carboxyltransferase C-terminal domain in the interval 35-296; the sequence is DLDKEIEQLE…KATLLRQLED (262 aa).

It belongs to the AccA family. Acetyl-CoA carboxylase is a heterohexamer composed of biotin carboxyl carrier protein (AccB), biotin carboxylase (AccC) and two subunits each of ACCase subunit alpha (AccA) and ACCase subunit beta (AccD).

The protein localises to the cytoplasm. It catalyses the reaction N(6)-carboxybiotinyl-L-lysyl-[protein] + acetyl-CoA = N(6)-biotinyl-L-lysyl-[protein] + malonyl-CoA. Its pathway is lipid metabolism; malonyl-CoA biosynthesis; malonyl-CoA from acetyl-CoA: step 1/1. Component of the acetyl coenzyme A carboxylase (ACC) complex. First, biotin carboxylase catalyzes the carboxylation of biotin on its carrier protein (BCCP) and then the CO(2) group is transferred by the carboxyltransferase to acetyl-CoA to form malonyl-CoA. This Vibrio parahaemolyticus serotype O3:K6 (strain RIMD 2210633) protein is Acetyl-coenzyme A carboxylase carboxyl transferase subunit alpha.